Consider the following 88-residue polypeptide: Insulin-related peptide 4 (88 aa).

Residues 1–19 (MKLTLIILLVVAYSWCSEA) form the signal peptide. Positions 20-45 (QNEARVFCGRVLSERLAALCWGPNSV) are excised as a propeptide. At arginine 65 the chain carries Arginine amide. Residues 69–88 (GLATECCDKACTVEELLSYC) constitute a propeptide that is removed on maturation.

This sequence belongs to the insulin family. In terms of tissue distribution, DAGWWLTRGAARSLGGVR-amide: Expressed in corpora cardiaca (CC), corpora allata (CA), antennal lobe (AL) and gnathal ganglion (GNG) (at protein level). Expression in CC and CA detected in most animals, in AL and GNG in few animals (at protein level).

The protein resides in the secreted. This chain is Insulin-related peptide 4, found in Agrotis ipsilon (Black cutworm moth).